A 1655-amino-acid chain; its full sequence is Outer membrane protein B (1655 aa).

Positions 1335 to 1362 (GALRYLGTPETAEMAGPEAGAIPAAVAA) are excised as a propeptide. In terms of domain architecture, Autotransporter spans 1367-1655 (VDNVAYGIWA…QGTLKVRVNF (289 aa)).

The protein belongs to the rickettsiae OmpA/OmpB family.

Its subcellular location is the periplasm. The protein resides in the secreted. It is found in the cell surface. It localises to the cell outer membrane. In terms of biological role, the 120 kDa surface-exposed protein is a major structural protein which may play a role as a rickettsial virulence factor and/or immunogen during infection. Its function is as follows. The 32 kDa beta peptide may serve as a membrane anchor. It has been shown to adhere to biotinylated Vero cell proteins. The protein is Outer membrane protein B (ompB) of Rickettsia conorii (strain ATCC VR-613 / Malish 7).